The primary structure comprises 282 residues: NAD-dependent protein deacetylase 1 (282 aa).

The Deacetylase sirtuin-type domain occupies 1–282; that stretch reads MTVGRAESPE…ADELSPLPTH (282 aa). Residues 25 to 45 and 101 to 104 contribute to the NAD(+) site; these read GAGISTDSGIPDYRGPESPPS and QNVD. The active-site Proton acceptor is His-119. Zn(2+) is bound by residues Cys-127, Cys-130, Cys-181, and Cys-184. Residues 221 to 223, 247 to 249, and Cys-265 contribute to the NAD(+) site; these read GSS and NRG.

Belongs to the sirtuin family. Class II subfamily. It depends on Zn(2+) as a cofactor.

The protein resides in the cytoplasm. The enzyme catalyses N(6)-acetyl-L-lysyl-[protein] + NAD(+) + H2O = 2''-O-acetyl-ADP-D-ribose + nicotinamide + L-lysyl-[protein]. Its function is as follows. NAD-dependent protein deacetylase which modulates the activities of several enzymes which are inactive in their acetylated form. In Mycobacterium avium (strain 104), this protein is NAD-dependent protein deacetylase 1.